Consider the following 507-residue polypeptide: Dolichyl pyrophosphate Man9GlcNAc2 alpha-1,3-glucosyltransferase (507 aa).

Over 1–3 (MEK) the chain is Cytoplasmic. The chain crosses the membrane as a helical span at residues 4-24 (WYLMTVVVLIGLTVRWTVSLN). The Lumenal segment spans residues 25–114 (SYSGAGKPPM…SQAHKLFMRT (90 aa)). Asn-59 carries an N-linked (GlcNAc...) asparagine glycan. A helical transmembrane segment spans residues 115–135 (TVLIADLLIYIPAVVLYCCCL). The Cytoplasmic portion of the chain corresponds to 136-143 (KEISTKKK). Residues 144–164 (IANALCILLYPGLILIDYGHF) traverse the membrane as a helical segment. Residues 165 to 172 (QYNSVSLG) lie on the Lumenal side of the membrane. The helical transmembrane segment at 173–193 (FALWGVLGISCDCDLLGSLAF) threads the bilayer. The Cytoplasmic segment spans residues 194-226 (CLAINYKQMELYHALPFFCFLLGKCFKKGLKGK). The helical transmembrane segment at 227-247 (GFVLLVKLACIVVASFVLCWL) threads the bilayer. The Lumenal portion of the chain corresponds to 248-297 (PFFTEREQTLQVLRRLFPVDRGLFEDKVANIWCSFNVFLKIKDILPRHIQ). A helical membrane pass occupies residues 298–318 (LIMSFCFTFLSLLPACIKLIL). Residues 319–323 (QPSSK) are Cytoplasmic-facing. A helical membrane pass occupies residues 324–344 (GFKFTLVSCALSFFLFSFQVH). At 345–361 (EKSILLVSLPVCLVLSE) the chain is on the lumenal side. The helical transmembrane segment at 362–382 (IPFMSTWFLLVSTFSMLPLLL) threads the bilayer. The Cytoplasmic segment spans residues 383–387 (KDELL). The chain crosses the membrane as a helical span at residues 388–408 (MPSVVTTMAFFIACVTSFSIF). At 409-437 (EKTSEEELQLKSFSISVRKYLPCFTFLSR) the chain is on the lumenal side. The chain crosses the membrane as a helical span at residues 438–458 (IIQYLFLISVITMVLLTLMTV). Over 459 to 473 (TLGPPQKLPDLFSVL) the chain is Cytoplasmic. Residues 474-494 (VCFVSCLNFLFFLVYFNIIIV) traverse the membrane as a helical segment. Residues 495-507 (WDSKSGRNQKKIS) are Lumenal-facing.

Belongs to the ALG6/ALG8 glucosyltransferase family.

It is found in the endoplasmic reticulum membrane. It catalyses the reaction an alpha-D-Man-(1-&gt;2)-alpha-D-Man-(1-&gt;2)-alpha-D-Man-(1-&gt;3)-[alpha-D-Man-(1-&gt;2)-alpha-D-Man-(1-&gt;3)-[alpha-D-Man-(1-&gt;2)-alpha-D-Man-(1-&gt;6)]-alpha-D-Man-(1-&gt;6)]-beta-D-Man-(1-&gt;4)-beta-D-GlcNAc-(1-&gt;4)-alpha-D-GlcNAc-diphospho-di-trans,poly-cis-dolichol + a di-trans,poly-cis-dolichyl beta-D-glucosyl phosphate = an alpha-D-Glc-(1-&gt;3)-alpha-D-Man-(1-&gt;2)-alpha-D-Man-(1-&gt;2)-alpha-D-Man-(1-&gt;3)-[alpha-D-Man-(1-&gt;2)-alpha-D-Man-(1-&gt;3)-[alpha-D-Man-(1-&gt;2)-alpha-D-Man-(1-&gt;6)]-alpha-D-Man-(1-&gt;6)]-beta-D-Man-(1-&gt;4)-beta-D-GlcNAc-(1-&gt;4)-alpha-D-GlcNAc-diphospho-di-trans,poly-cis-dolichol + a di-trans,poly-cis-dolichyl phosphate + H(+). Its pathway is protein modification; protein glycosylation. Functionally, dolichyl pyrophosphate Man9GlcNAc2 alpha-1,3-glucosyltransferase that operates in the biosynthetic pathway of dolichol-linked oligosaccharides, the glycan precursors employed in protein asparagine (N)-glycosylation. The assembly of dolichol-linked oligosaccharides begins on the cytosolic side of the endoplasmic reticulum membrane and finishes in its lumen. The sequential addition of sugars to dolichol pyrophosphate produces dolichol-linked oligosaccharides containing fourteen sugars, including two GlcNAcs, nine mannoses and three glucoses. Once assembled, the oligosaccharide is transferred from the lipid to nascent proteins by oligosaccharyltransferases. In the lumen of the endoplasmic reticulum, adds the first glucose residue from dolichyl phosphate glucose (Dol-P-Glc) onto the lipid-linked oligosaccharide intermediate Man(9)GlcNAc(2)-PP-Dol to produce Glc(1)Man(9)GlcNAc(2)-PP-Dol. Glc(1)Man(9)GlcNAc(2)-PP-Dol is a substrate for ALG8, the following enzyme in the biosynthetic pathway. The sequence is that of Dolichyl pyrophosphate Man9GlcNAc2 alpha-1,3-glucosyltransferase from Pongo abelii (Sumatran orangutan).